Here is a 600-residue protein sequence, read N- to C-terminus: Elongation factor 4 (600 aa).

A tr-type G domain is found at 5 to 187; sequence KYIRNFSIIA…AIVSKLPPPK (183 aa). Residues 17–22 and 134–137 contribute to the GTP site; these read DHGKST and NKLD.

The protein belongs to the TRAFAC class translation factor GTPase superfamily. Classic translation factor GTPase family. LepA subfamily.

It localises to the cell inner membrane. It catalyses the reaction GTP + H2O = GDP + phosphate + H(+). In terms of biological role, required for accurate and efficient protein synthesis under certain stress conditions. May act as a fidelity factor of the translation reaction, by catalyzing a one-codon backward translocation of tRNAs on improperly translocated ribosomes. Back-translocation proceeds from a post-translocation (POST) complex to a pre-translocation (PRE) complex, thus giving elongation factor G a second chance to translocate the tRNAs correctly. Binds to ribosomes in a GTP-dependent manner. In Rickettsia rickettsii (strain Iowa), this protein is Elongation factor 4.